Consider the following 377-residue polypeptide: Homoserine O-succinyltransferase (377 aa).

The AB hydrolase-1 domain occupies 50-358 (NAVLICHALS…PSSYGHDSFL (309 aa)). Ser-156 acts as the Nucleophile in catalysis. Arg-226 is a binding site for substrate. Catalysis depends on residues Asp-321 and His-354. Asp-355 lines the substrate pocket.

This sequence belongs to the AB hydrolase superfamily. MetX family. As to quaternary structure, homodimer.

Its subcellular location is the cytoplasm. It catalyses the reaction L-homoserine + succinyl-CoA = O-succinyl-L-homoserine + CoA. It functions in the pathway amino-acid biosynthesis; L-methionine biosynthesis via de novo pathway; O-succinyl-L-homoserine from L-homoserine: step 1/1. Its function is as follows. Transfers a succinyl group from succinyl-CoA to L-homoserine, forming succinyl-L-homoserine. This chain is Homoserine O-succinyltransferase, found in Nitrosomonas europaea (strain ATCC 19718 / CIP 103999 / KCTC 2705 / NBRC 14298).